Consider the following 289-residue polypeptide: UPF0276 protein BPP1075 (289 aa).

The protein belongs to the UPF0276 family.

This is UPF0276 protein BPP1075 from Bordetella parapertussis (strain 12822 / ATCC BAA-587 / NCTC 13253).